The sequence spans 117 residues: Large ribosomal subunit protein uL18 (117 aa).

Residues 1-17 (MNLSRNKARKVKQKRLR) are compositionally biased toward basic residues. A disordered region spans residues 1–23 (MNLSRNKARKVKQKRLRAKSELS).

This sequence belongs to the universal ribosomal protein uL18 family. As to quaternary structure, part of the 50S ribosomal subunit; part of the 5S rRNA/L5/L18/L25 subcomplex. Contacts the 5S and 23S rRNAs.

Functionally, this is one of the proteins that bind and probably mediate the attachment of the 5S RNA into the large ribosomal subunit, where it forms part of the central protuberance. This Mycoplasmopsis synoviae (strain 53) (Mycoplasma synoviae) protein is Large ribosomal subunit protein uL18.